A 146-amino-acid chain; its full sequence is 3-hydroxyacyl-[acyl-carrier-protein] dehydratase FabZ (146 aa).

His47 is an active-site residue.

Belongs to the thioester dehydratase family. FabZ subfamily.

It is found in the cytoplasm. The enzyme catalyses a (3R)-hydroxyacyl-[ACP] = a (2E)-enoyl-[ACP] + H2O. Its function is as follows. Involved in unsaturated fatty acids biosynthesis. Catalyzes the dehydration of short chain beta-hydroxyacyl-ACPs and long chain saturated and unsaturated beta-hydroxyacyl-ACPs. In Methylococcus capsulatus (strain ATCC 33009 / NCIMB 11132 / Bath), this protein is 3-hydroxyacyl-[acyl-carrier-protein] dehydratase FabZ.